The sequence spans 233 residues: Large ribosomal subunit protein uL1 (233 aa).

The protein belongs to the universal ribosomal protein uL1 family. As to quaternary structure, part of the 50S ribosomal subunit.

Binds directly to 23S rRNA. The L1 stalk is quite mobile in the ribosome, and is involved in E site tRNA release. Functionally, protein L1 is also a translational repressor protein, it controls the translation of the L11 operon by binding to its mRNA. This chain is Large ribosomal subunit protein uL1, found in Psychrobacter sp. (strain PRwf-1).